The following is a 649-amino-acid chain: Acetyl-coenzyme A synthetase (649 aa).

CoA is bound by residues 198 to 201, Thr317, and Asn341; that span reads RRGK. Residues 393–395, 417–422, Asp506, and Arg521 each bind ATP; these read GEP and DTWWQT. Ser529 is a CoA binding site. Arg532 serves as a coordination point for ATP. The Mg(2+) site is built by Val543, His545, and Val548. Lys612 carries the N6-acetyllysine modification. The interval 625–649 is disordered; it reads QPVQGDTSTLEDPTVLERLQASPAL.

Belongs to the ATP-dependent AMP-binding enzyme family. Requires Mg(2+) as cofactor. Acetylated. Deacetylation by the SIR2-homolog deacetylase activates the enzyme.

It carries out the reaction acetate + ATP + CoA = acetyl-CoA + AMP + diphosphate. In terms of biological role, catalyzes the conversion of acetate into acetyl-CoA (AcCoA), an essential intermediate at the junction of anabolic and catabolic pathways. AcsA undergoes a two-step reaction. In the first half reaction, AcsA combines acetate with ATP to form acetyl-adenylate (AcAMP) intermediate. In the second half reaction, it can then transfer the acetyl group from AcAMP to the sulfhydryl group of CoA, forming the product AcCoA. The sequence is that of Acetyl-coenzyme A synthetase from Deinococcus radiodurans (strain ATCC 13939 / DSM 20539 / JCM 16871 / CCUG 27074 / LMG 4051 / NBRC 15346 / NCIMB 9279 / VKM B-1422 / R1).